We begin with the raw amino-acid sequence, 274 residues long: Large ribosomal subunit protein uL2 (274 aa).

The tract at residues 224–274 is disordered; sequence VAMNPVDHPHGGGEGRTSGGRHPVTPWGIPTKGYKTRKNKRSNKLIVQKRK. Over residues 257–274 the composition is skewed to basic residues; the sequence is YKTRKNKRSNKLIVQKRK.

The protein belongs to the universal ribosomal protein uL2 family. As to quaternary structure, part of the 50S ribosomal subunit. Forms a bridge to the 30S subunit in the 70S ribosome.

Its function is as follows. One of the primary rRNA binding proteins. Required for association of the 30S and 50S subunits to form the 70S ribosome, for tRNA binding and peptide bond formation. It has been suggested to have peptidyltransferase activity; this is somewhat controversial. Makes several contacts with the 16S rRNA in the 70S ribosome. This is Large ribosomal subunit protein uL2 from Francisella philomiragia subsp. philomiragia (strain ATCC 25017 / CCUG 19701 / FSC 153 / O#319-036).